Reading from the N-terminus, the 414-residue chain is Glucose-6-phosphate isomerase (414 aa).

Residue Glu266 is the Proton donor of the active site. Residues His292 and Lys405 contribute to the active site.

The protein belongs to the GPI family.

It is found in the cytoplasm. It carries out the reaction alpha-D-glucose 6-phosphate = beta-D-fructose 6-phosphate. The protein operates within carbohydrate biosynthesis; gluconeogenesis. It functions in the pathway carbohydrate degradation; glycolysis; D-glyceraldehyde 3-phosphate and glycerone phosphate from D-glucose: step 2/4. In terms of biological role, catalyzes the reversible isomerization of glucose-6-phosphate to fructose-6-phosphate. The protein is Glucose-6-phosphate isomerase of Thermus thermophilus (strain ATCC BAA-163 / DSM 7039 / HB27).